A 657-amino-acid polypeptide reads, in one-letter code: Glycogen debranching enzyme (657 aa).

D336 (nucleophile) is an active-site residue. E371 acts as the Proton donor in catalysis. Positions 460-479 (ANGEENRDGTNNNYSNNHGK) are disordered.

This sequence belongs to the glycosyl hydrolase 13 family.

It carries out the reaction Hydrolysis of (1-&gt;6)-alpha-D-glucosidic linkages to branches with degrees of polymerization of three or four glucose residues in limit dextrin.. The protein operates within glycan degradation; glycogen degradation. Functionally, removes maltotriose and maltotetraose chains that are attached by 1,6-alpha-linkage to the limit dextrin main chain, generating a debranched limit dextrin. The sequence is that of Glycogen debranching enzyme from Escherichia coli O1:K1 / APEC.